The following is a 151-amino-acid chain: Large ribosomal subunit protein bL9 (151 aa).

The protein belongs to the bacterial ribosomal protein bL9 family.

Functionally, binds to the 23S rRNA. This Rhodococcus erythropolis (strain PR4 / NBRC 100887) protein is Large ribosomal subunit protein bL9.